The chain runs to 1045 residues: Probable beta-glucosidase E (1045 aa).

The segment at 1–74 (MAPPDSTHGG…SGSYQLRPVD (74 aa)) is disordered. The Cytoplasmic segment spans residues 1 to 163 (MAPPDSTHGG…PVKYARIWWR (163 aa)). The segment covering 11–20 (SFRDHLKTND) has biased composition (basic and acidic residues). A helical; Signal-anchor for type II membrane protein membrane pass occupies residues 164-184 (TLLAVIVTLAVVVWGFLSFAV). Topologically, residues 185-1045 (SHREEPKVWP…SRDLPLMGEY (861 aa)) are extracellular. Residues Asn-226, Asn-234, and Asn-402 are each glycosylated (N-linked (GlcNAc...) asparagine). The active site involves Asp-430. 6 N-linked (GlcNAc...) asparagine glycosylation sites follow: Asn-473, Asn-512, Asn-577, Asn-893, Asn-902, and Asn-988.

The protein belongs to the glycosyl hydrolase 3 family.

The protein resides in the cell membrane. The enzyme catalyses Hydrolysis of terminal, non-reducing beta-D-glucosyl residues with release of beta-D-glucose.. The protein operates within glycan metabolism; cellulose degradation. Its function is as follows. Beta-glucosidases are one of a number of cellulolytic enzymes involved in the degradation of cellulosic biomass. Catalyzes the last step releasing glucose from the inhibitory cellobiose. This is Probable beta-glucosidase E (bglE) from Neosartorya fischeri (strain ATCC 1020 / DSM 3700 / CBS 544.65 / FGSC A1164 / JCM 1740 / NRRL 181 / WB 181) (Aspergillus fischerianus).